A 255-amino-acid chain; its full sequence is DNA repair protein RecO (255 aa).

This sequence belongs to the RecO family.

Functionally, involved in DNA repair and RecF pathway recombination. This chain is DNA repair protein RecO, found in Acidithiobacillus ferrooxidans (strain ATCC 23270 / DSM 14882 / CIP 104768 / NCIMB 8455) (Ferrobacillus ferrooxidans (strain ATCC 23270)).